Here is a 168-residue protein sequence, read N- to C-terminus: Probable deoxyuridine 5'-triphosphate nucleotidohydrolase (168 aa).

The protein belongs to the dCTP deaminase family. Archaeal dUTPase subfamily.

The catalysed reaction is dUTP + H2O = dUMP + diphosphate + H(+). The protein operates within pyrimidine metabolism; dUMP biosynthesis; dUMP from dCTP (dUTP route): step 2/2. Its function is as follows. This enzyme is involved in nucleotide metabolism: it produces dUMP, the immediate precursor of thymidine nucleotides and it decreases the intracellular concentration of dUTP so that uracil cannot be incorporated into DNA. The protein is Probable deoxyuridine 5'-triphosphate nucleotidohydrolase of Archaeoglobus fulgidus (strain ATCC 49558 / DSM 4304 / JCM 9628 / NBRC 100126 / VC-16).